The primary structure comprises 340 residues: Fructose import permease protein FruG (340 aa).

A run of 9 helical transmembrane segments spans residues 23-43 (IPTL…QALF), 49-69 (LGFI…AVAM), 73-93 (ILTG…AVVG), 101-121 (VPAF…GLLA), 130-150 (MQPF…ASII), 182-202 (LSFN…YVFL), 234-254 (IIYL…TANI), 273-293 (VVIG…SVLG), and 307-327 (FGVP…VFVV).

Belongs to the binding-protein-dependent transport system permease family. As to quaternary structure, the complex is composed of an ATP-binding protein (FruK), two transmembrane proteins (FruF and FruG) and a solute-binding protein (FruE).

It localises to the cell membrane. Functionally, part of the high-affinity ABC transporter complex FruEKFG involved in fructose uptake. Can also transport ribose and xylose, with lower affinity. Probably responsible for the translocation of the substrate across the membrane. This Bifidobacterium longum (strain NCC 2705) protein is Fructose import permease protein FruG.